Here is a 781-residue protein sequence, read N- to C-terminus: AP-3 complex subunit beta (781 aa).

HEAT repeat units follow at residues 113-151 (PNLALLSINSIQRSLSDSNPDVRALALKTLSDINIASLY), 153-186 (IILHSLKKTVIDSSEVVRCQVAMTLLKLFKEQGI), 187-224 (SIKDDVMPMLKSLLADSEPSVVSAALLLFQKAFAQELQ), 294-332 (DHDLNLFLSSLKKLLHSPNAMVIVAVSKAFYQLSSPKTF), and 521-559 (PRICPDVLRRLLPQFSKEHAHVRLQILNLAAKLLSHDVD). Disordered stretches follow at residues 694–713 (KPKRSASVSSVPSNTFTSSH) and 731–781 (ARQS…ETTE). Residues 699-712 (ASVSSVPSNTFTSS) show a composition bias toward polar residues. Acidic residues predominate over residues 746–758 (STSEETDHTDDES). The segment covering 759–774 (GSSSGDESTESSYVSS) has biased composition (low complexity).

Belongs to the adaptor complexes large subunit family. Adaptor protein complex 3 (AP-3) is a heterotetramer composed of 2 large adaptins (APL5 and APL6), a medium adaptin (APM3) and a small adaptin (APS3).

The protein localises to the golgi apparatus. Its subcellular location is the cytoplasmic vesicle. It localises to the clathrin-coated vesicle membrane. Functionally, part of the AP-3 complex, an adaptor-related complex which is not clathrin-associated. The complex is associated with the Golgi region as well as more peripheral structures. It facilitates the budding of vesicles from the Golgi membrane and may be directly involved in trafficking to the vacuole. This Eremothecium gossypii (strain ATCC 10895 / CBS 109.51 / FGSC 9923 / NRRL Y-1056) (Yeast) protein is AP-3 complex subunit beta (APL6).